The following is a 404-amino-acid chain: POU domain, class 2, transcription factor 3L (404 aa).

2 disordered regions span residues 1–29 and 44–67; these read MNREPDSTVEQQHGSGHLENDAERDTLDF and TGIPHRPCHLSQASMMGGGQMTGE. Residues 16-29 show a composition bias toward basic and acidic residues; it reads GHLENDAERDTLDF. In terms of domain architecture, POU-specific spans 187–235; the sequence is QGDVGLAMGKLYGNDFSQTTISRFEALNLSFKNMCKLKPLLEKWLNDAE. Residues 259–297 constitute a DNA-binding region (homeobox); sequence KRKKRTSIETNIRLTLEKRFQDNPKPSSEEISMIAEQLV. The interval 346–367 is disordered; the sequence is MTVTSSCSPGNSSRPSSPTCGL. Positions 350–363 are enriched in low complexity; it reads SSCSPGNSSRPSSP.

The protein belongs to the POU transcription factor family. Class-2 subfamily.

The protein resides in the nucleus. Transcription factor that binds to the octamer motif (5'-ATTTGCAT-3') and regulates cell type-specific differentiation pathways. The protein is POU domain, class 2, transcription factor 3L (pou2f3.L) of Xenopus laevis (African clawed frog).